A 151-amino-acid polypeptide reads, in one-letter code: Phospholipase A2 inhibitor BjussuMIP (151 aa).

Positions 1–4 (LANG) are cleaved as a signal peptide. The C-type lectin domain maps to 31–146 (LKYAFLTVHK…CDENLLVVCE (116 aa)). Intrachain disulfides connect Cys68/Cys145 and Cys123/Cys137. The N-linked (GlcNAc...) asparagine glycan is linked to Asn107.

Belongs to the alpha-type phospholipase A2 inhibitor family. As to quaternary structure, oligomer. Expressed by the liver.

It is found in the secreted. Its function is as follows. Inhibits enzymatic, anticoagulant, edema formation, myotoxicity activities induced by snakes phospholipase A2. Is oligomeric, but it is probable that each of its subunits can bind and inactive a PLA2 molecule. The chain is Phospholipase A2 inhibitor BjussuMIP from Bothrops jararacussu (Jararacussu).